We begin with the raw amino-acid sequence, 716 residues long: MIYQSPTIQVELLEDNIAKLCFNAPGSVNKFDRETLASLDAALDSIKQQSNIQALVLTSGKDTFIVGADITEFLGLFAQDDAVLLSWVEQANAVFNKLEDLPFPTASAIKGFALGGGCETILATDFRIADTTAKIGLPETKLGIIPGFGGTVRLPRVIGADNALEWITTGKDQRPEDALKVGAVDAVVAPEALEAAAIQMLKDAVAEKLDWQARRHRKMSPLTLPKLEAMMSFTTAKGMVFAVAGKHYPAPMAAVSVVEQAATKGRSDALQIEHQAFIKLAKTDVAKALIGIFLNDQLVKGKAKKAGKLAKDVKSAAVLGAGIMGGGIAYQSASKGTPIVMKDIAQPALDLGLGEAAKLLSAQVARGRSTPEKMAKVLNNITPALDYAPVNHADVVVEAVVEHPKVKAQVLAEVEQYVSEDAIIASNTSTISINLLAKSMKKPERFCGMHFFNPVHKMPLVEVIRGEHSSEETIASVVAYASKMGKTPIVVNDCPGFFVNRVLFPYFAGFNGLLAEGGDFAAIDKVMEKQFGWPMGPAYLLDVVGLDTGHHAQAVMAEGFPDRMGKSGNDAIDVMFENKRLGQKNGKGFYAYSVDSRGKPKKDVDPTSYELLKAAFGEQKAFDADEIIARTMIPMIIETVRCLEEGIVASPAEADMGLVYGLGFPPFRGGVFRYLDTMGVANFVALADKYAHLGGLYQVTDAMRALAANNGSYYQA.

The tract at residues 1-189 (MIYQSPTIQV…KVGAVDAVVA (189 aa)) is enoyl-CoA hydratase/isomerase. Asp296 is a substrate binding site. The tract at residues 311 to 716 (KDVKSAAVLG…AANNGSYYQA (406 aa)) is 3-hydroxyacyl-CoA dehydrogenase. Residues Met324, Asp343, 400-402 (VVE), Lys407, and Ser429 contribute to the NAD(+) site. His450 acts as the For 3-hydroxyacyl-CoA dehydrogenase activity in catalysis. An NAD(+)-binding site is contributed by Asn453. Substrate is bound by residues Asn500 and Tyr660.

In the N-terminal section; belongs to the enoyl-CoA hydratase/isomerase family. This sequence in the C-terminal section; belongs to the 3-hydroxyacyl-CoA dehydrogenase family. In terms of assembly, heterotetramer of two alpha chains (FadB) and two beta chains (FadA).

It catalyses the reaction a (3S)-3-hydroxyacyl-CoA + NAD(+) = a 3-oxoacyl-CoA + NADH + H(+). The enzyme catalyses a (3S)-3-hydroxyacyl-CoA = a (2E)-enoyl-CoA + H2O. The catalysed reaction is a 4-saturated-(3S)-3-hydroxyacyl-CoA = a (3E)-enoyl-CoA + H2O. It carries out the reaction (3S)-3-hydroxybutanoyl-CoA = (3R)-3-hydroxybutanoyl-CoA. It catalyses the reaction a (3Z)-enoyl-CoA = a 4-saturated (2E)-enoyl-CoA. The enzyme catalyses a (3E)-enoyl-CoA = a 4-saturated (2E)-enoyl-CoA. It functions in the pathway lipid metabolism; fatty acid beta-oxidation. Functionally, involved in the aerobic and anaerobic degradation of long-chain fatty acids via beta-oxidation cycle. Catalyzes the formation of 3-oxoacyl-CoA from enoyl-CoA via L-3-hydroxyacyl-CoA. It can also use D-3-hydroxyacyl-CoA and cis-3-enoyl-CoA as substrate. The chain is Fatty acid oxidation complex subunit alpha from Shewanella sp. (strain MR-7).